Consider the following 271-residue polypeptide: Formamidopyrimidine-DNA glycosylase (271 aa).

The active-site Schiff-base intermediate with DNA is the Pro2. The active-site Proton donor is the Glu3. Lys57 functions as the Proton donor; for beta-elimination activity in the catalytic mechanism. DNA is bound by residues His90, Arg109, and Lys150. The FPG-type zinc finger occupies 235-269 (LVYGNKDKPCPKCGGKIESLIIGQRNSFFCPKCQK). Residue Arg259 is the Proton donor; for delta-elimination activity of the active site.

Belongs to the FPG family. In terms of assembly, monomer. Zn(2+) serves as cofactor.

It catalyses the reaction Hydrolysis of DNA containing ring-opened 7-methylguanine residues, releasing 2,6-diamino-4-hydroxy-5-(N-methyl)formamidopyrimidine.. The enzyme catalyses 2'-deoxyribonucleotide-(2'-deoxyribose 5'-phosphate)-2'-deoxyribonucleotide-DNA = a 3'-end 2'-deoxyribonucleotide-(2,3-dehydro-2,3-deoxyribose 5'-phosphate)-DNA + a 5'-end 5'-phospho-2'-deoxyribonucleoside-DNA + H(+). Functionally, involved in base excision repair of DNA damaged by oxidation or by mutagenic agents. Acts as a DNA glycosylase that recognizes and removes damaged bases. Has a preference for oxidized purines, such as 7,8-dihydro-8-oxoguanine (8-oxoG). Has AP (apurinic/apyrimidinic) lyase activity and introduces nicks in the DNA strand. Cleaves the DNA backbone by beta-delta elimination to generate a single-strand break at the site of the removed base with both 3'- and 5'-phosphates. The protein is Formamidopyrimidine-DNA glycosylase of Haemophilus influenzae (strain 86-028NP).